Consider the following 456-residue polypeptide: Enolase (456 aa).

Gln164 contacts (2R)-2-phosphoglycerate. The active-site Proton donor is Glu207. 3 residues coordinate Mg(2+): Asp244, Glu287, and Asp314. Lys339, Arg368, Ser369, and Lys390 together coordinate (2R)-2-phosphoglycerate. The active-site Proton acceptor is the Lys339.

The protein belongs to the enolase family. In terms of assembly, component of the RNA degradosome, a multiprotein complex involved in RNA processing and mRNA degradation. Mg(2+) serves as cofactor.

The protein localises to the cytoplasm. It is found in the secreted. The protein resides in the cell surface. The catalysed reaction is (2R)-2-phosphoglycerate = phosphoenolpyruvate + H2O. It participates in carbohydrate degradation; glycolysis; pyruvate from D-glyceraldehyde 3-phosphate: step 4/5. Catalyzes the reversible conversion of 2-phosphoglycerate (2-PG) into phosphoenolpyruvate (PEP). It is essential for the degradation of carbohydrates via glycolysis. The polypeptide is Enolase (Francisella tularensis subsp. tularensis (strain FSC 198)).